A 311-amino-acid chain; its full sequence is Delta-1-pyrroline-5-carboxylate reductase kk1I (311 aa).

The signal sequence occupies residues 1-31 (MTKRESNTLAVLGCGMVFLVSLLDLANRLLG). An N-linked (GlcNAc...) asparagine glycan is attached at Asn-59.

The protein belongs to the pyrroline-5-carboxylate reductase family.

Its pathway is secondary metabolite biosynthesis. Functionally, delta-1-pyrroline-5-carboxylate reductase; part of the gene cluster that mediates the biosynthesis of KK-1, a novel cyclic depsipeptide with 10 residues which is a promising active compound with high activity against many plant pathogens, especially Botrytis cinerea. Within the pathway, kk1I catalyzes the synthesis of the L-pipecolic acid residue of KK-1 from delta-1-pyrroline-5-carboxylate (P5C), a metabolic intermediate of lysine. The nonribosomal peptide synthetase (NRPS) kk1B catalyzes the elongation and cyclization of the decapeptide chain composed of 1 D-lactic acid residue (D-Lac), 1 pipecolic acid residue (Pip), 1 aspartic acid residue (Asp), 1 isoleucine residue (Ile), 1 glycine residue (Gly), 1 tyrosine residue (Tyr) and 4 valine residues (Val). The Asp, Ile and 3 Val residues are N-methylated by the 5 methyltransferase domains from the NRPS (found in modules 3, 5, 6, 7 and 9), whereas the Tyr residue is O-methylated by the cluster encoded O-methyltransferase kk1A. The thioesterase kk1J is likely to be involved in the corrective mechanism of peptide chain synthesis. The D-lactate dehydrogenase kk1H is involved in the synthesis of D-lactic acid from pyruvic acid, which is recognized by the A domain of the first kk1B module. The pyrroline-5-carboxylate reductase kk1I is involved in the synthesis of the L-pipecolic acid residue of KK-1 from delta-1-pyrroline-5-carboxylate (P5C), a metabolic intermediate of lysine. It still is unclear how kk1C and kk1D are involved in the production of KK-1. The sequence is that of Delta-1-pyrroline-5-carboxylate reductase kk1I from Curvularia clavata.